Reading from the N-terminus, the 340-residue chain is S-adenosylmethionine:tRNA ribosyltransferase-isomerase (340 aa).

Belongs to the QueA family. Monomer.

The protein localises to the cytoplasm. It carries out the reaction 7-aminomethyl-7-carbaguanosine(34) in tRNA + S-adenosyl-L-methionine = epoxyqueuosine(34) in tRNA + adenine + L-methionine + 2 H(+). The protein operates within tRNA modification; tRNA-queuosine biosynthesis. Transfers and isomerizes the ribose moiety from AdoMet to the 7-aminomethyl group of 7-deazaguanine (preQ1-tRNA) to give epoxyqueuosine (oQ-tRNA). The sequence is that of S-adenosylmethionine:tRNA ribosyltransferase-isomerase from Nitratiruptor sp. (strain SB155-2).